The chain runs to 422 residues: uncharacterized protein (422 aa).

A signal peptide spans 1 to 23 (MLSLIPFTVCAFLALITSKGGSA).

In terms of tissue distribution, component of the acid-insoluble organic matrix of the aragonitic skeleton (at protein level).

The protein localises to the secreted. This is an uncharacterized protein from Acropora millepora (Staghorn coral).